Reading from the N-terminus, the 135-residue chain is Mini-ribonuclease 3 (135 aa).

D19 is a catalytic residue.

It belongs to the MrnC RNase family. In terms of assembly, homodimer. Mg(2+) serves as cofactor.

Its subcellular location is the cytoplasm. Functionally, involved in correct processing of both the 5' and 3' ends of 23S rRNA precursor. Processes 30S rRNA precursor transcript even in absence of ribonuclease 3 (Rnc); Rnc processes 30S rRNA into smaller rRNA precursors. The sequence is that of Mini-ribonuclease 3 from Gloeobacter violaceus (strain ATCC 29082 / PCC 7421).